Consider the following 378-residue polypeptide: Uroporphyrinogen decarboxylase (378 aa).

Substrate contacts are provided by residues arginine 40–arginine 44, aspartate 90, tyrosine 167, serine 222, and histidine 355.

It belongs to the uroporphyrinogen decarboxylase family. In terms of assembly, homodimer.

Its subcellular location is the cytoplasm. The catalysed reaction is uroporphyrinogen III + 4 H(+) = coproporphyrinogen III + 4 CO2. Its pathway is porphyrin-containing compound metabolism; protoporphyrin-IX biosynthesis; coproporphyrinogen-III from 5-aminolevulinate: step 4/4. Catalyzes the decarboxylation of four acetate groups of uroporphyrinogen-III to yield coproporphyrinogen-III. This chain is Uroporphyrinogen decarboxylase, found in Psychrobacter arcticus (strain DSM 17307 / VKM B-2377 / 273-4).